Consider the following 129-residue polypeptide: Transcription antitermination protein NusB (129 aa).

Belongs to the NusB family.

In terms of biological role, involved in transcription antitermination. Required for transcription of ribosomal RNA (rRNA) genes. Binds specifically to the boxA antiterminator sequence of the ribosomal RNA (rrn) operons. This chain is Transcription antitermination protein NusB, found in Staphylococcus aureus (strain USA300 / TCH1516).